A 423-amino-acid chain; its full sequence is Myb-like protein G (423 aa).

Residues 36 to 90 form the HTH myb-type domain; that stretch reads TISKQRENWTDEEHQKFLEALTLFDRDWKKIESFVGSKTVIQIRSHAQKYFIKVQ. The H-T-H motif DNA-binding region spans 63–86; the sequence is WKKIESFVGSKTVIQIRSHAQKYF. Disordered regions lie at residues 93 to 116, 177 to 205, and 284 to 372; these read NTGE…QKQK, QQAV…GTTL, and ISPR…LGNY. Over residues 177-202 the composition is skewed to low complexity; the sequence is QQAVTTAQSSQRNGGLPPNPSSNNGG. Residues 286–295 show a composition bias toward polar residues; sequence PRNSTGNINV. Over residues 302–354 the composition is skewed to low complexity; that stretch reads NNSNNNNNNNNNNNNNNNNNNNNNNNNNNNNNNNNNNNNNNNNNNNNNNNNNN. Residues 361-372 are compositionally biased toward polar residues; sequence QNHSNMVNLGNY.

It is found in the nucleus. This is Myb-like protein G (mybG) from Dictyostelium discoideum (Social amoeba).